The sequence spans 347 residues: D-fructose 1,6-bisphosphatase class 2/sedoheptulose 1,7-bisphosphatase (347 aa).

Positions 33, 57, 97, and 100 each coordinate Mn(2+). Residues 100 to 102 (EGT), Y131, 176 to 178 (RKR), and 198 to 200 (DGD) each bind substrate. Residue E225 coordinates Mn(2+).

This sequence belongs to the FBPase class 2 family. As to quaternary structure, homotetramer. Requires Mn(2+) as cofactor.

It catalyses the reaction beta-D-fructose 1,6-bisphosphate + H2O = beta-D-fructose 6-phosphate + phosphate. The catalysed reaction is D-sedoheptulose 1,7-bisphosphate + H2O = D-sedoheptulose 7-phosphate + phosphate. It functions in the pathway carbohydrate biosynthesis; Calvin cycle. Functionally, catalyzes the hydrolysis of fructose 1,6-bisphosphate (Fru 1,6-P2) and sedoheptulose 1,7-bisphosphate (Sed 1,7-P2) to fructose 6-phosphate and sedoheptulose 7-phosphate, respectively. The polypeptide is D-fructose 1,6-bisphosphatase class 2/sedoheptulose 1,7-bisphosphatase (Synechococcus sp. (strain JA-3-3Ab) (Cyanobacteria bacterium Yellowstone A-Prime)).